The sequence spans 263 residues: MPEGPEIRRAADNLEAAIKGKPLTDVWFAFAQLKPYESQLTGQLVTRIETRGKALLTHFSNGLTLYSHNQLYGVWRVIDTGEIPQTTRILRVRLQTADKTILLYSASDIEMLTAEQLTTHPFLQRVGPDVLDARLTPEEVKARLLSPRFRNRQFSGLLLDQAFLAGLGNYLRVEILWQVGLTGQHKAKDLNEAQLNALSHALLDIPRLSYTTRGQSDENKHHGALFRFKVFHRDGEACERCGGIIEKTTLSSRPFYWCPHCQK.

The active-site Schiff-base intermediate with DNA is proline 2. Catalysis depends on glutamate 3, which acts as the Proton donor. Catalysis depends on lysine 53, which acts as the Proton donor; for beta-elimination activity. Positions 70, 125, and 169 each coordinate DNA. Residues 229–263 (KVFHRDGEACERCGGIIEKTTLSSRPFYWCPHCQK) form an FPG-type zinc finger. Arginine 253 functions as the Proton donor; for delta-elimination activity in the catalytic mechanism.

The protein belongs to the FPG family. The cofactor is Zn(2+).

It catalyses the reaction 2'-deoxyribonucleotide-(2'-deoxyribose 5'-phosphate)-2'-deoxyribonucleotide-DNA = a 3'-end 2'-deoxyribonucleotide-(2,3-dehydro-2,3-deoxyribose 5'-phosphate)-DNA + a 5'-end 5'-phospho-2'-deoxyribonucleoside-DNA + H(+). Its function is as follows. Involved in base excision repair of DNA damaged by oxidation or by mutagenic agents. Acts as a DNA glycosylase that recognizes and removes damaged bases. Has a preference for oxidized pyrimidines, such as thymine glycol, 5,6-dihydrouracil and 5,6-dihydrothymine. Has AP (apurinic/apyrimidinic) lyase activity and introduces nicks in the DNA strand. Cleaves the DNA backbone by beta-delta elimination to generate a single-strand break at the site of the removed base with both 3'- and 5'-phosphates. The chain is Endonuclease 8 from Salmonella enteritidis PT4 (strain P125109).